The primary structure comprises 425 residues: Monoacylglycerol lipase ABHD2 (425 aa).

Topologically, residues 1–9 (MNAMLETPE) are cytoplasmic. A helical; Signal-anchor for type II membrane protein transmembrane segment spans residues 10 to 30 (LPAVFDGVKLAAVAAVLYVIV). Over 31 to 425 (RCLNLKSPTA…DTEQVEADLE (395 aa)) the chain is Extracellular. The 255-residue stretch at 128-382 (MVICPGIANH…HGGHLGFFEG (255 aa)) folds into the AB hydrolase-1 domain. The N-linked (GlcNAc...) asparagine glycan is linked to Asn-136. The active-site Nucleophile is Ser-207. Residues Asp-345 and His-376 each act as charge relay system in the active site.

Belongs to the AB hydrolase superfamily. AB hydrolase 4 family. As to expression, present in sperm (at protein level).

It is found in the cell projection. The protein resides in the cilium. Its subcellular location is the flagellum membrane. The protein localises to the cell membrane. It catalyses the reaction an acetyl ester + H2O = an aliphatic alcohol + acetate + H(+). It carries out the reaction Hydrolyzes glycerol monoesters of long-chain fatty acids.. The catalysed reaction is a triacylglycerol + H2O = a diacylglycerol + a fatty acid + H(+). The enzyme catalyses 2-(5Z,8Z,11Z,14Z-eicosatetraenoyl)-glycerol + H2O = glycerol + (5Z,8Z,11Z,14Z)-eicosatetraenoate + H(+). It catalyses the reaction a butanoate ester + H2O = an aliphatic alcohol + butanoate + H(+). It carries out the reaction hexadecanoate ester + H2O = an aliphatic alcohol + hexadecanoate + H(+). Acylglycerol lipase activity is activated upon binding to progesterone. In terms of biological role, progesterone-dependent acylglycerol lipase that catalyzes hydrolysis of endocannabinoid arachidonoylglycerol (AG) from cell membrane. Acts as a progesterone receptor: progesterone-binding activates the acylglycerol lipase activity, mediating degradation of 1-arachidonoylglycerol (1AG) and 2-arachidonoylglycerol (2AG) to glycerol and arachidonic acid (AA). Also displays an ester hydrolase activity against acetyl ester, butanoate ester and hexadecanoate ester. Plays a key role in sperm capacitation in response to progesterone by mediating degradation of 2AG, an inhibitor of the sperm calcium channel CatSper, leading to calcium influx via CatSper and sperm activation. May also play a role in smooth muscle cells migration. The sequence is that of Monoacylglycerol lipase ABHD2 from Homo sapiens (Human).